Reading from the N-terminus, the 98-residue chain is Large ribosomal subunit protein uL23 (98 aa).

It belongs to the universal ribosomal protein uL23 family. Part of the 50S ribosomal subunit. Contacts protein L29, and trigger factor when it is bound to the ribosome.

Its function is as follows. One of the early assembly proteins it binds 23S rRNA. One of the proteins that surrounds the polypeptide exit tunnel on the outside of the ribosome. Forms the main docking site for trigger factor binding to the ribosome. This chain is Large ribosomal subunit protein uL23, found in Streptococcus gordonii (strain Challis / ATCC 35105 / BCRC 15272 / CH1 / DL1 / V288).